Reading from the N-terminus, the 98-residue chain is NADH-ubiquinone oxidoreductase chain 4L (98 aa).

Helical transmembrane passes span 1-21 (MSLV…GLLM), 29-49 (SLLC…LTIL), and 61-81 (IILL…LVMV).

It belongs to the complex I subunit 4L family. As to quaternary structure, core subunit of respiratory chain NADH dehydrogenase (Complex I) which is composed of 45 different subunits.

Its subcellular location is the mitochondrion inner membrane. It carries out the reaction a ubiquinone + NADH + 5 H(+)(in) = a ubiquinol + NAD(+) + 4 H(+)(out). Core subunit of the mitochondrial membrane respiratory chain NADH dehydrogenase (Complex I) which catalyzes electron transfer from NADH through the respiratory chain, using ubiquinone as an electron acceptor. Part of the enzyme membrane arm which is embedded in the lipid bilayer and involved in proton translocation. The chain is NADH-ubiquinone oxidoreductase chain 4L (MT-ND4L) from Rangifer tarandus (Reindeer).